The chain runs to 166 residues: Transcription antitermination protein NusB (166 aa).

Positions 1 to 18 (MISDESDRFNPRDPKPAD) are enriched in basic and acidic residues. Positions 1–28 (MISDESDRFNPRDPKPADAGKPSKSAKR) are disordered.

The protein belongs to the NusB family.

Involved in transcription antitermination. Required for transcription of ribosomal RNA (rRNA) genes. Binds specifically to the boxA antiterminator sequence of the ribosomal RNA (rrn) operons. This chain is Transcription antitermination protein NusB, found in Pseudomonas putida (strain W619).